The following is a 360-amino-acid chain: Phosphoserine aminotransferase (360 aa).

L-glutamate is bound at residue R42. Pyridoxal 5'-phosphate contacts are provided by residues 76 to 77 (AS), W102, T152, D171, and Q194. K195 carries the N6-(pyridoxal phosphate)lysine modification. 236–237 (NT) contacts pyridoxal 5'-phosphate.

Belongs to the class-V pyridoxal-phosphate-dependent aminotransferase family. SerC subfamily. In terms of assembly, homodimer. Pyridoxal 5'-phosphate serves as cofactor.

It localises to the cytoplasm. It carries out the reaction O-phospho-L-serine + 2-oxoglutarate = 3-phosphooxypyruvate + L-glutamate. The enzyme catalyses 4-(phosphooxy)-L-threonine + 2-oxoglutarate = (R)-3-hydroxy-2-oxo-4-phosphooxybutanoate + L-glutamate. It functions in the pathway amino-acid biosynthesis; L-serine biosynthesis; L-serine from 3-phospho-D-glycerate: step 2/3. In terms of biological role, catalyzes the reversible conversion of 3-phosphohydroxypyruvate to phosphoserine and of 3-hydroxy-2-oxo-4-phosphonooxybutanoate to phosphohydroxythreonine. This chain is Phosphoserine aminotransferase, found in Geobacillus kaustophilus (strain HTA426).